Consider the following 218-residue polypeptide: Small ribosomal subunit protein uS3 (218 aa).

Positions 38–106 constitute a KH type-2 domain; sequence IREYINKRLQ…REHINIVEIK (69 aa).

It belongs to the universal ribosomal protein uS3 family. In terms of assembly, part of the 30S ribosomal subunit. Forms a tight complex with proteins S10 and S14.

Its function is as follows. Binds the lower part of the 30S subunit head. Binds mRNA in the 70S ribosome, positioning it for translation. This Geobacillus stearothermophilus (Bacillus stearothermophilus) protein is Small ribosomal subunit protein uS3.